Here is a 332-residue protein sequence, read N- to C-terminus: MVNSTHRGMHASLHLWNRSSHRLHSNASESLGKGYSDGGCYEQLFVSPEVFVTLGVISLLENILVIVAIAKNKNLHSPMYFFICSLAVADMLVSVSNGSETIVITLLNSTDTDTQSFTVNIDNVIDSVICSSLLASICSLLSIAVDRYFTIFYALQYHNIMTVKRVRIIISCIWAACTVSGILFIIYSDSSAVIICLITMFFTMLALMASLYVHMFLMARLHIKRIAVLPGTGAIRQGANMKGAITLTILIGVFVVCWAPFFLHLIFYISCPQNPYCVCFMSHFNLYLILIMCNSVIDPLIYALRSQELRKTFKEIICCYPLGGLCDLSSRY.

Residues 1–43 are Extracellular-facing; that stretch reads MVNSTHRGMHASLHLWNRSSHRLHSNASESLGKGYSDGGCYEQ. 3 N-linked (GlcNAc...) asparagine glycosylation sites follow: Asn-3, Asn-17, and Asn-26. Intrachain disulfides connect Cys-40–Cys-279 and Cys-271–Cys-277. A helical membrane pass occupies residues 44–69; the sequence is LFVSPEVFVTLGVISLLENILVIVAI. Over 70-81 the chain is Cytoplasmic; it reads AKNKNLHSPMYF. Residues 82 to 106 form a helical membrane-spanning segment; that stretch reads FICSLAVADMLVSVSNGSETIVITL. Glu-100, Asp-122, and Asp-126 together coordinate Ca(2+). Over 107 to 123 the chain is Extracellular; that stretch reads LNSTDTDTQSFTVNIDN. Residues 124 to 145 traverse the membrane as a helical segment; that stretch reads VIDSVICSSLLASICSLLSIAV. Over 146 to 165 the chain is Cytoplasmic; the sequence is DRYFTIFYALQYHNIMTVKR. Residues 166-186 form a helical membrane-spanning segment; it reads VRIIISCIWAACTVSGILFII. Residues 187–191 lie on the Extracellular side of the membrane; the sequence is YSDSS. The helical transmembrane segment at 192–215 threads the bilayer; the sequence is AVIICLITMFFTMLALMASLYVHM. At 216 to 248 the chain is on the cytoplasmic side; sequence FLMARLHIKRIAVLPGTGAIRQGANMKGAITLT. Residues 249–271 traverse the membrane as a helical segment; sequence ILIGVFVVCWAPFFLHLIFYISC. Topologically, residues 272 to 280 are extracellular; that stretch reads PQNPYCVCF. Residues 281–304 form a helical membrane-spanning segment; it reads MSHFNLYLILIMCNSVIDPLIYAL. Residues 305–332 lie on the Cytoplasmic side of the membrane; sequence RSQELRKTFKEIICCYPLGGLCDLSSRY. Residue Cys-318 is the site of S-palmitoyl cysteine attachment.

Belongs to the G-protein coupled receptor 1 family. In terms of assembly, homodimer; disulfide-linked, also forms higher order oligomers. Interacts with GNAS. Interacts with ATRNL1. Interacts with MGRN1; this interaction competes with GNAS-binding and thus inhibits agonist-induced cAMP production. Interacts with MRAP and MRAP2; these associated factors increase ligand-sensitivity and generation of cAMP.

Its subcellular location is the cell membrane. Its function is as follows. Hormone receptor that acts as a key component of the leptin-melanocortin pathway at the intersection of homeostatic maintenance of energetic state. Plays a role in regulating food intake: activation by a stimulating hormone such as anorexigenic alpha-melanocyte stimulating hormone (alpha-MSH) inhibits appetite, whereas binding to a natural antagonist like Agouti-related protein/AGRP promotes appetite. G-protein-coupled receptor that activates conventional Galphas signaling leading to induction of anorexogenic signaling in the hypothalamus to result in negative energy balance. Regulates the firing activity of neurons from the hypothalamus by alpha-MSH and AGRP independently of Galphas signaling by ligand-induced coupling of closure of inwardly rectifying potassium channel KCNJ13. In intestinal epithelial cells, plays a role in the inhibition of hepatic glucose production via nesfatin-1/NUCB2 leading to increased cyclic adenosine monophosphate (cAMP) levels and glucagon-like peptide 1 (GLP-1) secretion in the intestinal epithelium. In Macaca fascicularis (Crab-eating macaque), this protein is Melanocortin receptor 4 (MC4R).